The chain runs to 377 residues: MSNEGKPLQLTESKKIDAKSGEKEKALSLVVGQIERNFGKGSIMRLGDASKMRVETISTGALTLDLALGGGYPKGRVIEVYGPESSGKTTLTLHAIAEIQRNGGVAAFVDAEHALDPVYAASLGVDVENLLVSQPDTGEMALEIVDQLIRSAAVDLVVVDSVAALTPRSEIEGEMGDHSVGAQARLMSQAMRKITGNIGKSGCTVIFLNQLRLKIGITYGNPETTTGGNALKFYASVRLDIRRIQTLKRGTEEYGIRAKVKVAKNKVAPPFRIAEFDILFGKGISTLGCLLDLADETNVVTRKGAWYSYEGDNIGQGRDNTITWLEQNPESKEIIEKLVKEKLTEGSEVSANSMRPLASAARQASSRPNLSQVSANG.

ATP is bound at residue 82–89 (GPESSGKT). Residues 345–377 (EGSEVSANSMRPLASAARQASSRPNLSQVSANG) form a disordered region. Residues 362 to 377 (RQASSRPNLSQVSANG) are compositionally biased toward polar residues.

This sequence belongs to the RecA family.

The protein localises to the cytoplasm. Can catalyze the hydrolysis of ATP in the presence of single-stranded DNA, the ATP-dependent uptake of single-stranded DNA by duplex DNA, and the ATP-dependent hybridization of homologous single-stranded DNAs. It interacts with LexA causing its activation and leading to its autocatalytic cleavage. The chain is Protein RecA from Prochlorococcus marinus (strain NATL2A).